Reading from the N-terminus, the 372-residue chain is N-methyl-L-tryptophan oxidase (372 aa).

FAD is bound at residue 4–34; that stretch reads DLIIIGSGSVGAAAGYYATRAGLNVLMTDAH. Position 308 is an S-8alpha-FAD cysteine (Cys308).

The protein belongs to the MSOX/MTOX family. MTOX subfamily. As to quaternary structure, monomer. The cofactor is FAD.

The enzyme catalyses N(alpha)-methyl-L-tryptophan + O2 + H2O = L-tryptophan + formaldehyde + H2O2. Catalyzes the oxidative demethylation of N-methyl-L-tryptophan. This is N-methyl-L-tryptophan oxidase from Escherichia coli O1:K1 / APEC.